The primary structure comprises 386 residues: D-galactosamine-6-phosphate deaminase AgaS (386 aa).

2 SIS domains span residues 59 to 217 (LTPI…CIEM) and 222 to 366 (LTER…PDNP).

Belongs to the SIS family. AgaS subfamily.

It localises to the cytoplasm. It carries out the reaction D-galactosamine 6-phosphate + H2O = D-tagatopyranose 1-phosphate + NH4(+). The enzyme catalyses alpha-D-glucosamine 6-phosphate + H2O = beta-D-fructose 6-phosphate + NH4(+). In terms of biological role, involved in the pathway of N-acetyl-D-galactosamine degradation. Catalyzes the conversion of D-galactosamine 6-phosphate (GalN-6-P) to D-tagatofuranose 6-phosphate (Tag-6-P). It can also catalyze the conversion of D-glucosamine 6-phosphate. This chain is D-galactosamine-6-phosphate deaminase AgaS, found in Shewanella sp. (strain ANA-3).